The following is a 1363-amino-acid chain: Homeobox protein 13 (1363 aa).

Residues 15–73 (FVMEQIQQQQQQQQQQQQQQQQQQQQQQQQQQQQLQQQQQQQQQQQQQQQQQQQQQQQN) adopt a coiled-coil conformation. Disordered stretches follow at residues 66 to 96 (QQQQ…STVP), 120 to 177 (SQHA…INGS), 308 to 437 (INGT…YHGG), 621 to 731 (LNSP…QHQQ), 765 to 818 (HHHH…PQHS), 857 to 911 (SINS…SNSI), 1001 to 1137 (QNYN…TLIN), 1166 to 1202 (NFIN…KRMR), and 1270 to 1341 (ISFG…TLIS). Over residues 73 to 96 (NPKMNNQPNETRLPSPPLLNSTVP) the composition is skewed to polar residues. Residues 132–147 (SLNSSNNNNNNNFNNS) are compositionally biased toward low complexity. Over residues 148–158 (RPTFSSCSGNS) the composition is skewed to polar residues. Composition is skewed to low complexity over residues 159-177 (NNTT…INGS) and 315-326 (SNHSNNNNNNNN). Residues 327–339 (NHHHHHHHHHQKR) show a composition bias toward basic residues. A compositionally biased stretch (low complexity) spans 348-378 (TNHLTPLPLLHKHTNNNNNINNNNNHNHNNI). Residues 379 to 393 (LGSPNQLNRSQDFTS) show a composition bias toward polar residues. Composition is skewed to low complexity over residues 394–408 (KNNN…NNKI), 415–426 (NKGSPNQNSSEN), 641–693 (NNNS…NNNI), 709–731 (HHQQ…QHQQ), and 770–793 (QQQQ…SNHN). A coiled-coil region spans residues 738–789 (QQQLQIQYQQQQTHNNNLNQTQQLYYNHHHHQQQQQQQQQQQQHNNNNNNNN). 2 stretches are compositionally biased toward polar residues: residues 794-818 (SVLT…PQHS) and 857-883 (SINS…QKNR). Composition is skewed to low complexity over residues 889-911 (ILNS…SNSI), 1001-1031 (QNYN…NNNF), and 1045-1063 (NINN…NNNN). The span at 1064–1078 (KNDKNESEFESKEKL) shows a compositional bias: basic and acidic residues. The segment covering 1081–1095 (PFGSSIPNIVNNEQL) has biased composition (polar residues). 3 stretches are compositionally biased toward low complexity: residues 1096 to 1116 (SPYS…PQWS), 1123 to 1137 (TSSS…TLIN), and 1166 to 1177 (NFINNNSNNNNN). Over residues 1179–1195 (EIDDDDEDGIDGIEGED) the composition is skewed to acidic residues. Positions 1198-1261 (KKRMRKTTRP…NRRTKDKLKN (64 aa)) form a DNA-binding region, homeobox. Residues 1275-1294 (SSTSSTQTSTNSPSSQLSPL) are compositionally biased toward low complexity. Over residues 1297–1316 (NMNNNDQQSISTPSLILSQI) the composition is skewed to polar residues. Residues 1317-1334 (NNNQNNNQNNNNNNNTNN) show a composition bias toward low complexity.

Its subcellular location is the nucleus. In terms of biological role, putative transcription factor. The chain is Homeobox protein 13 (hbx13) from Dictyostelium discoideum (Social amoeba).